We begin with the raw amino-acid sequence, 254 residues long: Trypsin (254 aa).

Positions 1–16 (MLRFIAVFALVNCALA) are cleaved as a signal peptide. Positions 17–26 (GTLPNDLDGR) are cleaved as a propeptide — activation peptide. The region spanning 27 to 252 (IVNGVDTTIE…VRSWIEKTAK (226 aa)) is the Peptidase S1 domain. C53 and C69 are joined by a disulfide. Active-site charge relay system residues include H68 and D113. Intrachain disulfides connect C154/C158, C178/C195, and C204/C228. Residue S208 is the Charge relay system of the active site.

It belongs to the peptidase S1 family.

The protein localises to the secreted. It is found in the extracellular space. It catalyses the reaction Preferential cleavage: Arg-|-Xaa, Lys-|-Xaa.. Functionally, involved in digestion of a protein meal. The chain is Trypsin from Sarcophaga bullata (Grey flesh fly).